Consider the following 656-residue polypeptide: Cyclic AMP-dependent transcription factor ATF-6 alpha (656 aa).

Residues 1 to 137 form a transcription activation region; that stretch reads MESPFSPVLP…SPSSVEPLKE (137 aa). Over 1 to 377 the chain is Cytoplasmic; that stretch reads MESPFSPVLP…VMIVLAFIML (377 aa). K75 participates in a covalent cross-link: Glycyl lysine isopeptide (Lys-Gly) (interchain with G-Cter in SUMO2). The segment at 75–169 is disordered; the sequence is KAEPQPLSPA…MSSKPSVQPK (95 aa). Composition is skewed to low complexity over residues 78–101 and 111–121; these read PQPLSPASSSCSISSPRSTDSCSS and LLSSSQSPLSL. A Glycyl lysine isopeptide (Lys-Gly) (interchain with G-Cter in ubiquitin) cross-link involves residue K139. One can recognise a bZIP domain in the interval 293–356; that stretch reads VLRRQQRMIK…DEVVSENQRL (64 aa). The interval 295-326 is basic motif; that stretch reads RRQQRMIKNRESACQSRKKKKEYMLGLEARLK. Residues 335–342 form a leucine-zipper region; the sequence is LKKENGSL. The chain crosses the membrane as a helical; Signal-anchor for type II membrane protein span at residues 378-398; that stretch reads NYGPMSMLEQESRRVKPSVSP. Positions 391 to 429 are disordered; that stretch reads RVKPSVSPANQRRHLLEFSAKEVKDTSDGDNQKDSYSYD. Residues 399-656 are Lumenal-facing; that stretch reads ANQRRHLLEF…VVSTIPESLQ (258 aa). A compositionally biased stretch (basic and acidic residues) spans 404–427; the sequence is HLLEFSAKEVKDTSDGDNQKDSYS. An interaction with THBS4 region spans residues 455 to 575; sequence QPLINTTESL…ATTHNKTTRP (121 aa). N-linked (GlcNAc...) asparagine glycans are attached at residues N459, N570, and N629. Residues 632 to 650 are compositionally biased toward low complexity; sequence STFFGSPPTTTETTHVVST. The disordered stretch occupies residues 632 to 656; it reads STFFGSPPTTTETTHVVSTIPESLQ.

It belongs to the bZIP family. ATF subfamily. In terms of assembly, interacts with XBP1 isoform 2; the interaction occurs in a ER stress-dependent manner. Interacts with LACC1. As to quaternary structure, interacts with THBS4 (via EGF-like 3; calcium-binding domain) which facilitates its processing, activation and nuclear translocation. Interacts (via lumenal domain) with THBS1. Homodimer and heterodimer with ATF6-beta. The dimer interacts with the nuclear transcription factor Y (NF-Y) trimer through direct binding to NF-Y subunit C (NF-YC). Also interacts with the transcription factors GTF2I, YY1 and SRF. During unfolded protein response, a fragment of approximately 50 kDa containing the cytoplasmic transcription factor domain is released by proteolysis. The cleavage seems to be performed sequentially by site-1 (MBTPS1, S1P) and site-2 (MBTPS2, S2P) proteases. Post-translationally, N-glycosylated; in its luminal domain. The glycosylation status may serve as a sensor for ER homeostasis, resulting in ATF6 activation to trigger the unfolded protein response (UPR). In terms of processing, ubiquitinated by RNF186 at Lys-139, which is required for pattern recognition receptor-induced unfolded protein response-associated outcomes.

The protein resides in the endoplasmic reticulum membrane. It is found in the golgi apparatus membrane. Its subcellular location is the nucleus. Functionally, precursor of the transcription factor form (Processed cyclic AMP-dependent transcription factor ATF-6 alpha), which is embedded in the endoplasmic reticulum membrane. Endoplasmic reticulum stress promotes processing of this form, releasing the transcription factor form that translocates into the nucleus, where it activates transcription of genes involved in the unfolded protein response (UPR). Its function is as follows. Transcription factor that initiates the unfolded protein response (UPR) during endoplasmic reticulum stress by activating transcription of genes involved in the UPR. Binds DNA on the 5'-CCAC[GA]-3'half of the ER stress response element (ERSE) (5'-CCAAT-N(9)-CCAC[GA]-3') and of ERSE II (5'-ATTGG-N-CCACG-3'). Binding to ERSE requires binding of NF-Y to ERSE. Could also be involved in activation of transcription by the serum response factor. May play a role in foveal development and cone function in the retina. In Mus musculus (Mouse), this protein is Cyclic AMP-dependent transcription factor ATF-6 alpha (Atf6).